The sequence spans 485 residues: MTKAIRVRYAPSPTGLLHIGNARTALFNYLYARHYGGTFIIRIEDTDRKRHVEDGERSQLENLRWLGIDWDESPETHENYRQSERLDMYQKYVNELLDKGLAYKSYVTEEELAAERERQEAAGETPRYINEYLGMSEEEKAAYIAEREAAGIIPTVRLAVNETGVYKWTDIVKGEIEFEGGNIGGDWVIQKKDGYPTYNFAVVIDDHLMEISHVIRGDDHIANTPKQLMVYEALGWEAPEFGHMTLIINSETGKKLSKRDTNTLQFIEDYRKKGYLPEAVFNFIALLGWNPGGEHEIFSRQELIELFDEKRLSKSPAAFDQKKLDWMNNEYIKNADFDTIFALAKPYLEEAGRLTDKAEKLVELYKPQMKSVDEIVPLTDLFFADFPELTDAEREVMAGETVPTVLTAFKEKLEAMSDADFVTENIFPQIKAVQKETGIKGKNLFMPIRIAVSGEMHGPELPDTIYLLGREKSIQHIENMLNQIQ.

The 'HIGH' region motif lies at Pro11 to Asn21. The 'KMSKS' region signature appears at Lys255 to Arg259. Lys258 serves as a coordination point for ATP.

This sequence belongs to the class-I aminoacyl-tRNA synthetase family. Glutamate--tRNA ligase type 1 subfamily. As to quaternary structure, monomer.

The protein localises to the cytoplasm. It catalyses the reaction tRNA(Glu) + L-glutamate + ATP = L-glutamyl-tRNA(Glu) + AMP + diphosphate. Its function is as follows. Catalyzes the attachment of glutamate to tRNA(Glu) in a two-step reaction: glutamate is first activated by ATP to form Glu-AMP and then transferred to the acceptor end of tRNA(Glu). This Streptococcus sanguinis (strain SK36) protein is Glutamate--tRNA ligase.